The following is an 853-amino-acid chain: Bromodomain-containing protein bet-1 (853 aa).

A compositionally biased stretch (polar residues) spans 1-19 (MSEGSGDQSQQRPWASPRQ). 2 disordered regions span residues 1–22 (MSEG…QQPI) and 141–245 (SLEQ…LRAK). In terms of domain architecture, Bromo 1 spans 39-145 (RHTNKLDYIM…EVIKKSLEQA (107 aa)). Positions 141–153 (SLEQAPREEHDMD) are enriched in basic and acidic residues. Composition is skewed to low complexity over residues 166–175 (SDGGSKSSSS) and 192–215 (SEVS…SVAA). Lys-252 participates in a covalent cross-link: Glycyl lysine isopeptide (Lys-Gly) (interchain with G-Cter in SUMO). A Bromo 2 domain is found at 257 to 366 (QPLLPSMKPC…EVFDRRWAEL (110 aa)). Low complexity predominate over residues 369 to 381 (SSSRASSVAPQSA). The tract at residues 369–418 (SSSRASSVAPQSAPIAPTPKVAKSSAPKEPKESRKEHKKETTFEASGAKS) is disordered. A compositionally biased stretch (basic and acidic residues) spans 394–410 (APKEPKESRKEHKKETT). Positions 419–458 (EDLMQINNALSMIREREEKLKAELAAAQAIKDKLTSVKNR) form a coiled coil. Positions 516–601 (DSDDEDNKMA…TIPTLNGNGD (86 aa)) constitute an NET domain. 2 disordered regions span residues 594–814 (PTLN…DEQT) and 819–838 (MRME…VSLS). The span at 612 to 624 (TSSGATGSKGSSS) shows a compositional bias: low complexity. Residues 684–696 (QPPSTSREWNQSS) are compositionally biased toward polar residues. The span at 708 to 736 (QPPMSRVPASSSTSVSAIGKNNAAASSNS) shows a compositional bias: low complexity. Residues 786–807 (QFFQSQPTTSATIRSPTESQPG) are compositionally biased toward polar residues. Over residues 819–832 (MRMEAKRARQKEDE) the composition is skewed to basic and acidic residues.

It belongs to the BET family. As to quaternary structure, interacts with acetylated histone H4. Interacts (via BROMO domain 2) with smo-1 and ubc-9. Expressed in T-cells, Q-cells, V5-cells and their descendants such as somatic gonad and syncytium.

It is found in the nucleus. The protein localises to the chromosome. Required for the establishment and maintenance of stable cell fate in several lineages including V5.pa, T, Z1/Z4 and QR lineages probably by repressing the expression of cell fate determinants. Required to maintain non-distal tip cell (DTC) fate of somatic gonadal cells through the htz-1-mediated repression of transcription factor ceh-22. Regulates the subnuclear localization of histone variant htz-1 in somatic gonadal cells. Plays a role in the attenuation of the let-60/ras pathway, probably by preventing expression of activators of the pathway. Involved in adult locomotion. Acts together with the sumoylation pathway to prevent muscle myosin depletion in aging adults probably by preventing myoblast growth factor receptor egl-15 overexpression. May play a role in vulva development. The polypeptide is Bromodomain-containing protein bet-1 (Caenorhabditis elegans).